The following is a 686-amino-acid chain: MPRRDLVRIVLVGDDGVGKSSIITSLIKEAFVTNVPHVVPEVTIPPEITPENFTTSIVDTSSNPRSRPHLLSSISRAHVICLVYSIADPSSFDRVAEYWLPLFRREGINVPVILVGNKIDLRGGRVTNQGLEDESAPIMREFKEVETVVECSALLPLNVSEVFYFAQKAVLHPTAPLYDSREHTLKPKCLEALKRIFTISDVDKDGLLNAHELNQFQQKCFSTPLQSQELDGILEIVRSYDPYAVQPLPSSSPNTPLSRDSSYGQLHYFNNNVVPPSPPQEGITELGFLYLHTMFIQQGRMETTWTVLRKFGYGESLDLREDFLAPKFDVPSDCSVELSPLGNQFLTDIFEAYDKDQDGALSQNELDDLFSTSPGNPWLSQGFPDTTITDDMGRVTLQGWLAQWSMTTLLNHRTTLNYLAYLGYSSSPATDLPTPTALHVTRPRKQDRRQRKVTRNVFLCYVLGATGSGKTSLLRSFVNRPFKGGEDGLGGYEPTTKVLSVVNSVEMEGVEKYLVLQEFGSKYESEILRNSKRLDMADIIIYVHDSSDTNSFSYISNLRQQYSLDHIPSIFVATKSDLDLAQQRHEVQPDVYCRRLGLQAPMAVSSRLGPLHNLWVAITRVALDPTSSLPRGPRSQMSPAQRIRVVARWGLAATTISAIVAVWMKWQGYSFKGIWGWMAKFAGLRT.

Topologically, residues 1–648 (MPRRDLVRIV…PAQRIRVVAR (648 aa)) are cytoplasmic. One can recognise a Miro 1 domain in the interval 4 to 172 (RDLVRIVLVG…FYFAQKAVLH (169 aa)). GTP contacts are provided by residues 13–20 (GDDGVGKS), 59–63 (DTSSN), and 117–120 (NKID). EF-hand domains are found at residues 188 to 223 (KCLE…CFST) and 341 to 376 (LGNQ…SPGN). Residues Asp201, Asp203, Asp205, Glu212, Asp354, Asp356, Asp358, and Glu365 each contribute to the Ca(2+) site. The 170-residue stretch at 455–624 (RNVFLCYVLG…WVAITRVALD (170 aa)) folds into the Miro 2 domain. GTP is bound by residues 464–471 (GATGSGKT), 506–510 (EMEGV), and 574–577 (TKSD). Residues 649–665 (WGLAATTISAIVAVWMK) form a helical; Anchor for type IV membrane protein membrane-spanning segment. Residues 666–686 (WQGYSFKGIWGWMAKFAGLRT) are Mitochondrial intermembrane-facing.

The protein belongs to the mitochondrial Rho GTPase family.

Its subcellular location is the mitochondrion outer membrane. Mitochondrial GTPase involved in mitochondrial trafficking. Probably involved in control of anterograde transport of mitochondria and their subcellular distribution. The sequence is that of Mitochondrial Rho GTPase 1 (GEM1) from Cryptococcus neoformans var. neoformans serotype D (strain B-3501A) (Filobasidiella neoformans).